We begin with the raw amino-acid sequence, 278 residues long: Dermonecrotic toxin Ls4SicTox-alphaIII1ii (278 aa).

Residue His-5 is part of the active site. Glu-25 and Asp-27 together coordinate Mg(2+). The active-site Nucleophile is the His-40. Cys-44 and Cys-50 are disulfide-bonded. A Mg(2+)-binding site is contributed by Asp-84.

The protein belongs to the arthropod phospholipase D family. Class I subfamily. Mg(2+) is required as a cofactor. As to expression, expressed by the venom gland.

Its subcellular location is the secreted. It carries out the reaction an N-(acyl)-sphingosylphosphocholine = an N-(acyl)-sphingosyl-1,3-cyclic phosphate + choline. It catalyses the reaction an N-(acyl)-sphingosylphosphoethanolamine = an N-(acyl)-sphingosyl-1,3-cyclic phosphate + ethanolamine. The catalysed reaction is a 1-acyl-sn-glycero-3-phosphocholine = a 1-acyl-sn-glycero-2,3-cyclic phosphate + choline. The enzyme catalyses a 1-acyl-sn-glycero-3-phosphoethanolamine = a 1-acyl-sn-glycero-2,3-cyclic phosphate + ethanolamine. Its function is as follows. Dermonecrotic toxins cleave the phosphodiester linkage between the phosphate and headgroup of certain phospholipids (sphingolipid and lysolipid substrates), forming an alcohol (often choline) and a cyclic phosphate. This toxin acts on sphingomyelin (SM). It may also act on ceramide phosphoethanolamine (CPE), lysophosphatidylcholine (LPC) and lysophosphatidylethanolamine (LPE), but not on lysophosphatidylserine (LPS), and lysophosphatidylglycerol (LPG). It acts by transphosphatidylation, releasing exclusively cyclic phosphate products as second products. Induces dermonecrosis, hemolysis, increased vascular permeability, edema, inflammatory response, and platelet aggregation. This chain is Dermonecrotic toxin Ls4SicTox-alphaIII1ii, found in Loxosceles sp. (strain 4 GJB-2008) (Recluse spider).